Consider the following 285-residue polypeptide: 2,3,4,5-tetrahydropyridine-2,6-dicarboxylate N-succinyltransferase (285 aa).

Residues R111 and D148 each contribute to the substrate site.

Belongs to the transferase hexapeptide repeat family. As to quaternary structure, homotrimer.

The protein localises to the cytoplasm. The catalysed reaction is (S)-2,3,4,5-tetrahydrodipicolinate + succinyl-CoA + H2O = (S)-2-succinylamino-6-oxoheptanedioate + CoA. The protein operates within amino-acid biosynthesis; L-lysine biosynthesis via DAP pathway; LL-2,6-diaminopimelate from (S)-tetrahydrodipicolinate (succinylase route): step 1/3. This Sinorhizobium fredii (strain NBRC 101917 / NGR234) protein is 2,3,4,5-tetrahydropyridine-2,6-dicarboxylate N-succinyltransferase.